The following is a 3744-amino-acid chain: SAGA complex/NuA4 acetyltransferase complex subunit TRA1 (3744 aa).

N-acetylserine is present on serine 2. HEAT repeat units follow at residues 2 to 40 (SLTE…LLNS), 46 to 92 (FFLQ…NQTF), 94 to 131 (PYAM…SFKS), and 135 to 172 (DKLD…DLDS). Positions 2–2598 (SLTEQIEQFA…KPYHTRQISS (2597 aa)) are HEAT. At serine 172 the chain carries Phosphoserine. Basic and acidic residues predominate over residues 185–195 (FSKNDEEKDFP). The disordered stretch occupies residues 185 to 212 (FSKNDEEKDFPSKQSSTEPRFENSTSSN). The span at 196 to 212 (SKQSSTEPRFENSTSSN) shows a compositional bias: polar residues. 3 HEAT repeats span residues 247-284 (PEFT…ISTE), 319-357 (QDYV…ILST), and 437-477 (KLLL…RFKT). Residues 522–539 (LEPSDDDHLMPQPKKEDI) are compositionally biased toward basic and acidic residues. The segment at 522-546 (LEPSDDDHLMPQPKKEDINDSPDVE) is disordered. Serine 542 carries the phosphoserine modification. HEAT repeat units lie at residues 588-628 (RTLM…VFSY), 734-771 (PNFA…LSFM), 779-821 (INEV…SIGG), 829-867 (RSIK…TVPV), 870-910 (SVLA…NLTA), 919-958 (PVID…RNRQ), 1074-1112 (NQEN…HFCL), 1188-1225 (SFIP…NVKS), 1283-1320 (KVLE…LTGI), 1369-1408 (TFNE…SEQL), 1435-1472 (NIRI…ENSK), 1476-1512 (ELLQ…LLIA), 1693-1734 (LKLK…RFTE), 1739-1776 (DQNP…SSNK), 1918-1955 (FPIK…VLHE), 2115-2155 (ELGL…LDSE), 2182-2219 (ENLP…AIKA), 2230-2267 (SPGK…FMNF), 2269-2307 (DNIV…ARIT), and 2536-2573 (IISS…SIPK). The segment at 2599 to 3744 (RTNVINMLLD…RTDVNFMPWF (1146 aa)) is head. In terms of domain architecture, FAT spans 2622 to 3177 (LVKYLAISYN…HFQLRTTKED (556 aa)). The PI3K/PI4K catalytic domain occupies 3374–3732 (FLPTVDFVRG…CIGSAVSPRN (359 aa)). The interval 3380–3386 (FVRGTHS) is G-loop. The interval 3563 to 3571 (MINNRTPHK) is catalytic loop. The segment at 3600–3625 (LKNHDLSLPPDSPIFHNNEPVPFRLT) is activation loop. In terms of domain architecture, FATC spans 3712 to 3744 (TPTVTTQFILDCIGSAVSPRNLARTDVNFMPWF).

The protein belongs to the PI3/PI4-kinase family. TRA1 subfamily. In terms of assembly, component of the 1.8 MDa SAGA (Spt-Ada-Gcn5 acetyltransferase) complex, which is composed of 19 subunits TRA1, SPT7, TAF5, NGG1/ADA3, SGF73, SPT20/ADA5, SPT8, TAF12, TAF6, HFI1/ADA1, UBP8, GCN5, ADA2, SPT3, SGF29, TAF10, TAF9, SGF11 and SUS1. The SAGA complex is composed of 4 modules, namely the HAT (histone acetyltransferase) module (GCN5, ADA2, NGG1/ADA3 and SGF29), the DUB (deubiquitinating) module (UBP8, SGF11, SGF73 and SUS1), the core or TAF (TBP-associated factor) module (TAF5, TAF6, TAF9, TAF10 and TAF12), and the Tra1 or SPT (Suppressor of Ty) module (TRA1, HFI1/ADA1, SPT3, SPT7, SPT8 and SPT20/ADA5). The Tra1/SPT module binds activators, the core module recruits TBP (TATA-binding protein), the HAT module contains the histone H3 acetyltransferase GCN5, and the DUB module comprises the histone H2B deubiquitinase UBP8. Also identified in an altered form of SAGA, named SALSA (SAGA altered, Spt8 absent) or SLIK (SAGA-like) complex, which contains a C-terminal truncated form of SPT7 and is missing SPT8. However, it has been shown that the SAGA and SAGA-like SALSA/SLIK transcriptional coactivators are structurally and biochemically equivalent. Component of the NuA4 acetyltransferase complex, which consists of the catalytic subunit ESA1 and the 12 non-catalytic subunits ACT1, ARP4, EAF1/VID21, SWC4/EAF2, EAF3, EAF5, EAF6, EAF7, EPL1, TRA1, YAF9 and YNG2. TRA1 is the scaffold subunit for binding to a variety of transcription activators or transcription factors to recruit NuA4 for targeted gene activation. Identified in the Ada.spt complex with NGG1/ADA3 and SPT7.

Its subcellular location is the nucleus. Essential scaffold subunit of the transcription coactivator SAGA complex. SAGA acts as a general cofactor required for essentially all RNA polymerase II transcription. At the promoters, SAGA is required for transcription pre-initiation complex (PIC) recruitment. It influences RNA polymerase II transcriptional activity through different activities such as TBP interaction (via core/TAF module) and promoter selectivity, interaction with transcription activators (via Tra1/SPT module), and chromatin modification through histone acetylation (via HAT module) and deubiquitination (via DUB module). SAGA preferentially acetylates histones H3 (to form H3K9ac, H3K14ac, H3K18ac and H3K23ac) and H2B and deubiquitinates histone H2B. SAGA interacts with DNA via upstream activating sequences (UASs). Also identified in a modified version of SAGA named SALSA or SLIK. The cleavage of SPT7 and the absence of the SPT8 subunit in SLIK neither drive any major conformational differences in its structure compared with SAGA, nor significantly affect HAT, DUB, or DNA-binding activities. Component of the NuA4 histone H4/H2A acetyltransferase involved in transcription and DNA repair. The sequence is that of SAGA complex/NuA4 acetyltransferase complex subunit TRA1 from Saccharomyces cerevisiae (strain ATCC 204508 / S288c) (Baker's yeast).